Here is a 357-residue protein sequence, read N- to C-terminus: DNA replication and repair protein RecF (357 aa).

ATP is bound at residue 31 to 38 (GQNGAGKT).

It belongs to the RecF family.

The protein localises to the cytoplasm. In terms of biological role, the RecF protein is involved in DNA metabolism; it is required for DNA replication and normal SOS inducibility. RecF binds preferentially to single-stranded, linear DNA. It also seems to bind ATP. This is DNA replication and repair protein RecF from Coxiella burnetii (strain CbuG_Q212) (Coxiella burnetii (strain Q212)).